Here is a 468-residue protein sequence, read N- to C-terminus: Factor XIIa inhibitor (468 aa).

The first 23 residues, 1–23 (MASRLTPLTLLLLLLLAGDRVTS), serve as a signal peptide directing secretion. The interval 27–60 (VGPGNLQEGESEGDSQKGGILDGESIQGNEDSPT) is disordered. N-linked (GlcNAc...) asparagine glycans are attached at residues asparagine 65, asparagine 176, asparagine 227, and asparagine 326. Cystine bridges form between cysteine 97–cysteine 396 and cysteine 104–cysteine 179.

Belongs to the serpin family. In terms of processing, N- and O-glycosylated.

It is found in the secreted. Functionally, may play a potentially crucial role in regulating important physiological pathways including complement activation, blood coagulation, fibrinolysis and the generation of kinins. The polypeptide is Factor XIIa inhibitor (Bos taurus (Bovine)).